A 218-amino-acid polypeptide reads, in one-letter code: MSERVSEEPGLDKGDRAEECELDDPELKAIRMRVREMEEEAERLKGLSGQDKSIGVSTRPCMQTTHSKMTAGAYTEGPPQPLSAEEKKEIDKRSVYVGNVDYGSTAQDLEAHFSSCGSINRITILCDKFSGHPKGYAYIEFAERNSVDAAVAMDETVFRGRTIKVLPKRTNMPGISSTDRGGFRGRPRGNRGNYQRGQRPRGRPFRGRGRPGPLNNPY.

Disordered stretches follow at residues 1–24 (MSERVSEEPGLDKGDRAEECELDD) and 169–218 (RTNM…NNPY). Positions 93 to 170 (RSVYVGNVDY…RTIKVLPKRT (78 aa)) constitute an RRM domain. The span at 198–209 (QRPRGRPFRGRG) shows a compositional bias: basic residues.

Homodimer; Upon poly(A) binding, undergoes a dimer-monomer transition that removes the polyproline motif from the RNA recognition site and allows it to be replaced by the adenosine nucleotides of poly(A).

Its subcellular location is the cytoplasm. Functionally, binds the poly(A) tail of mRNA. Unable to interact with the cap-binding complex and is therefore unlikely to be involved in translation initiation. In Xenopus laevis (African clawed frog), this protein is Embryonic polyadenylate-binding protein 2-B (Pabpn1l-b).